Here is a 78-residue protein sequence, read N- to C-terminus: Small ribosomal subunit protein bS16c (78 aa).

It belongs to the bacterial ribosomal protein bS16 family.

Its subcellular location is the plastid. The protein resides in the chloroplast. The protein is Small ribosomal subunit protein bS16c of Chara vulgaris (Common stonewort).